A 274-amino-acid polypeptide reads, in one-letter code: tRNA-cytidine(32) 2-sulfurtransferase (274 aa).

Positions 40–45 match the PP-loop motif motif; that stretch reads SGGKDS. Residues Cys-115, Cys-118, and Cys-206 each contribute to the [4Fe-4S] cluster site.

This sequence belongs to the TtcA family. As to quaternary structure, homodimer. It depends on Mg(2+) as a cofactor. [4Fe-4S] cluster serves as cofactor.

The protein localises to the cytoplasm. The enzyme catalyses cytidine(32) in tRNA + S-sulfanyl-L-cysteinyl-[cysteine desulfurase] + AH2 + ATP = 2-thiocytidine(32) in tRNA + L-cysteinyl-[cysteine desulfurase] + A + AMP + diphosphate + H(+). Its pathway is tRNA modification. Its function is as follows. Catalyzes the ATP-dependent 2-thiolation of cytidine in position 32 of tRNA, to form 2-thiocytidine (s(2)C32). The sulfur atoms are provided by the cysteine/cysteine desulfurase (IscS) system. The polypeptide is tRNA-cytidine(32) 2-sulfurtransferase (Stutzerimonas stutzeri (strain A1501) (Pseudomonas stutzeri)).